The following is a 740-amino-acid chain: Transcription activator of gluconeogenesis NCU03938 (740 aa).

Residues 1–66 (MPDDVGPAEA…KYDPKDPLRP (66 aa)) form a disordered region. The span at 19 to 37 (SDNEYDETEVTTKDDDDEK) shows a compositional bias: acidic residues. The span at 52–65 (GDQKKKYDPKDPLR) shows a compositional bias: basic and acidic residues. Positions 75–103 (CYACQRAHLTCGDERPCQRCIKRGLAEAC) form a DNA-binding region, zn(2)-C6 fungal-type. Disordered regions lie at residues 333–405 (PAGP…RQRD), 532–579 (NSDT…KEQP), and 639–674 (APTASGGSGSSNGTVVNGGPDSSPAGKTEKERPTGV). Positions 337-351 (TSLQSPSTENNSPQP) are enriched in polar residues. Positions 475–546 (ALFEHEEFMH…SISSKGGRGG (72 aa)) constitute a PAS domain. A compositionally biased stretch (low complexity) spans 639–658 (APTASGGSGSSNGTVVNGGP).

The protein belongs to the ERT1/acuK family.

Its subcellular location is the nucleus. Transcription factor which regulates nonfermentable carbon utilization. Activator of gluconeogenetic genes. This Neurospora crassa (strain ATCC 24698 / 74-OR23-1A / CBS 708.71 / DSM 1257 / FGSC 987) protein is Transcription activator of gluconeogenesis NCU03938.